Reading from the N-terminus, the 276-residue chain is 4-hydroxy-tetrahydrodipicolinate reductase (276 aa).

NAD(+) is bound by residues 10 to 15, Asp36, and 109 to 111; these read GALGKM and GTT. His165 acts as the Proton donor/acceptor in catalysis. His166 lines the (S)-2,3,4,5-tetrahydrodipicolinate pocket. Lys169 serves as the catalytic Proton donor. 175–176 is a binding site for (S)-2,3,4,5-tetrahydrodipicolinate; it reads GT.

Belongs to the DapB family.

It localises to the cytoplasm. The catalysed reaction is (S)-2,3,4,5-tetrahydrodipicolinate + NAD(+) + H2O = (2S,4S)-4-hydroxy-2,3,4,5-tetrahydrodipicolinate + NADH + H(+). The enzyme catalyses (S)-2,3,4,5-tetrahydrodipicolinate + NADP(+) + H2O = (2S,4S)-4-hydroxy-2,3,4,5-tetrahydrodipicolinate + NADPH + H(+). Its pathway is amino-acid biosynthesis; L-lysine biosynthesis via DAP pathway; (S)-tetrahydrodipicolinate from L-aspartate: step 4/4. In terms of biological role, catalyzes the conversion of 4-hydroxy-tetrahydrodipicolinate (HTPA) to tetrahydrodipicolinate. The chain is 4-hydroxy-tetrahydrodipicolinate reductase from Prochlorococcus marinus (strain SARG / CCMP1375 / SS120).